The primary structure comprises 138 residues: Large ribosomal subunit protein uL16 (138 aa).

A compositionally biased stretch (basic residues) spans 1 to 21; that stretch reads MLIPRKVKHRKQHHPSLRGRA. The disordered stretch occupies residues 1–22; sequence MLIPRKVKHRKQHHPSLRGRAK.

The protein belongs to the universal ribosomal protein uL16 family. Part of the 50S ribosomal subunit.

In terms of biological role, binds 23S rRNA and is also seen to make contacts with the A and possibly P site tRNAs. The protein is Large ribosomal subunit protein uL16 of Thermobifida fusca (strain YX).